A 491-amino-acid polypeptide reads, in one-letter code: UDP-GalNAc:beta-1,3-N-acetylgalactosaminyltransferase 2 (491 aa).

Residues 1 to 2 (MR) are Cytoplasmic-facing. Residues 3 to 23 (SAAAALSVCVLAVLLHWICWT) traverse the membrane as a helical; Signal-anchor for type II membrane protein segment. Topologically, residues 24–491 (DRSAELLGFR…NKCGDPCGCS (468 aa)) are lumenal. Residues N167 and N230 are each glycosylated (N-linked (GlcNAc...) asparagine).

It belongs to the glycosyltransferase 31 family.

It localises to the golgi apparatus membrane. Its subcellular location is the endoplasmic reticulum. The enzyme catalyses 3-O-(N-acetyl-beta-D-glucosaminyl-(1-&gt;4)-alpha-D-mannosyl)-L-threonyl-[protein] + UDP-N-acetyl-alpha-D-galactosamine = 3-O-[beta-D-GalNAc-(1-&gt;3)-beta-D-GlcNAc-(1-&gt;4)-alpha-D-Man]-L-Thr-[protein] + UDP + H(+). It participates in protein modification; protein glycosylation. Its function is as follows. Beta-1,3-N-acetylgalactosaminyltransferase that synthesizes a unique carbohydrate structure, GalNAc-beta-1-3GlcNAc, on N- and O-glycans. Has no galactose nor galactosaminyl transferase activity toward any acceptor substrate. Involved in alpha-dystroglycan (dag1) glycosylation. This chain is UDP-GalNAc:beta-1,3-N-acetylgalactosaminyltransferase 2 (b3galnt2), found in Danio rerio (Zebrafish).